The chain runs to 244 residues: 5-oxoprolinase subunit A (244 aa).

It belongs to the LamB/PxpA family. Forms a complex composed of PxpA, PxpB and PxpC.

The enzyme catalyses 5-oxo-L-proline + ATP + 2 H2O = L-glutamate + ADP + phosphate + H(+). Functionally, catalyzes the cleavage of 5-oxoproline to form L-glutamate coupled to the hydrolysis of ATP to ADP and inorganic phosphate. The chain is 5-oxoprolinase subunit A from Salmonella dublin (strain CT_02021853).